Reading from the N-terminus, the 266-residue chain is DLA class II histocompatibility antigen, DR-1 beta chain (266 aa).

Positions 1-29 are cleaved as a signal peptide; it reads MVCLCFLGGSWMTALMLILMVLNPPFAWA. The beta-1 stretch occupies residues 30–124; sequence RDTPPHFLEV…IESFTVQRRV (95 aa). At 30 to 227 the chain is on the extracellular side; sequence RDTPPHFLEV…RAQSDSAQSK (198 aa). Intrachain disulfides connect Cys-44–Cys-108 and Cys-146–Cys-202. Asn-48 carries an N-linked (GlcNAc...) asparagine glycan. Positions 125 to 227 are beta-2; the sequence is EPTVTVYPTK…RAQSDSAQSK (103 aa). The Ig-like C1-type domain occupies 126–214; sequence PTVTVYPTKT…EHPSLTSPVT (89 aa). Residues 228–250 form a helical membrane-spanning segment; sequence MLSGIGGFVLGLLFLAVGLFIYF. The Cytoplasmic portion of the chain corresponds to 251-266; that stretch reads RNQKGHSGLQPTGLLS.

The protein belongs to the MHC class II family.

It is found in the membrane. The polypeptide is DLA class II histocompatibility antigen, DR-1 beta chain (Canis lupus familiaris (Dog)).